The following is a 354-amino-acid chain: MSARTVKLAVIPGDGIGPEVVAEGLKVLSAVAPRHGLTLDTTEYELGAQRWHATGEVLPDAVEEELRQHDAILLGAVGDPTVPSGVLERGLLLRLRFNFSHYVNLRPVRLYPGVTTPLAGVAPEDIDMLVVREGTEGPYAGMGGVLRKGTPHEIATQDSVNTRLGVERVVRYAFAKAAERPCHKLTLVHKDNVLTYAGELWQRVVREVGAEYPQVEVDYLHVDAATMFFVTQPRRFDVVVTDNLFGDIITDLGAAVAGGIGLAASGNINPEGDFPSMFEPVHGSAPDIAGQGKADPTATILSVSLMLEHLGYADAAAQIDQAVAEDLQERAKNGGVRSTTQIGDDIAQRVAEQG.

The substrate site is built by Arg-96, Arg-106, Arg-132, and Asp-223. Mg(2+) contacts are provided by Asp-223, Asp-247, and Asp-251. 283 to 295 (GSAPDIAGQGKAD) provides a ligand contact to NAD(+).

It belongs to the isocitrate and isopropylmalate dehydrogenases family. LeuB type 2 subfamily. Homodimer. Requires Mg(2+) as cofactor. The cofactor is Mn(2+).

The protein localises to the cytoplasm. It catalyses the reaction (2R,3S)-3-isopropylmalate + NAD(+) = 4-methyl-2-oxopentanoate + CO2 + NADH. Its pathway is amino-acid biosynthesis; L-leucine biosynthesis; L-leucine from 3-methyl-2-oxobutanoate: step 3/4. Catalyzes the oxidation of 3-carboxy-2-hydroxy-4-methylpentanoate (3-isopropylmalate) to 3-carboxy-4-methyl-2-oxopentanoate. The product decarboxylates to 4-methyl-2 oxopentanoate. The protein is 3-isopropylmalate dehydrogenase of Thermobifida fusca (strain YX).